A 104-amino-acid chain; its full sequence is Integration host factor subunit beta (104 aa).

Belongs to the bacterial histone-like protein family. Heterodimer of an alpha and a beta chain.

Its function is as follows. This protein is one of the two subunits of integration host factor, a specific DNA-binding protein that functions in genetic recombination as well as in transcriptional and translational control. The chain is Integration host factor subunit beta from Xylella fastidiosa (strain M23).